The sequence spans 216 residues: 3-isopropylmalate dehydratase small subunit (216 aa).

Belongs to the LeuD family. LeuD type 1 subfamily. In terms of assembly, heterodimer of LeuC and LeuD.

It carries out the reaction (2R,3S)-3-isopropylmalate = (2S)-2-isopropylmalate. Its pathway is amino-acid biosynthesis; L-leucine biosynthesis; L-leucine from 3-methyl-2-oxobutanoate: step 2/4. Catalyzes the isomerization between 2-isopropylmalate and 3-isopropylmalate, via the formation of 2-isopropylmaleate. This Acidovorax ebreus (strain TPSY) (Diaphorobacter sp. (strain TPSY)) protein is 3-isopropylmalate dehydratase small subunit.